A 342-amino-acid chain; its full sequence is Ribosomal RNA small subunit methyltransferase H (342 aa).

S-adenosyl-L-methionine contacts are provided by residues 36–38, aspartate 56, phenylalanine 82, aspartate 100, and glutamine 107; that span reads GGH. Residues 309 to 342 form a disordered region; that stretch reads ENRESGMGKGHGAAASRFPTPDSRFPTSPNGDAP. A compositionally biased stretch (polar residues) spans 333-342; it reads FPTSPNGDAP.

Belongs to the methyltransferase superfamily. RsmH family.

It is found in the cytoplasm. The enzyme catalyses cytidine(1402) in 16S rRNA + S-adenosyl-L-methionine = N(4)-methylcytidine(1402) in 16S rRNA + S-adenosyl-L-homocysteine + H(+). In terms of biological role, specifically methylates the N4 position of cytidine in position 1402 (C1402) of 16S rRNA. The chain is Ribosomal RNA small subunit methyltransferase H from Xanthomonas campestris pv. campestris (strain B100).